The primary structure comprises 359 residues: Trans-enoyl reductase mpsG (359 aa).

3 residues coordinate NADP(+): Tyr-212, Leu-259, and Thr-278.

Belongs to the zinc-containing alcohol dehydrogenase family. Monomer.

Its pathway is secondary metabolite biosynthesis. Its function is as follows. Trans-enoyl reductase; part of the gene cluster that mediates the biosynthesis of macrophasetins, 3-decalinoyltetramic acids (DTAs) which feature a tetramate (pyrrolidine-2,4-dione) unit connected to a decalin fragment and that have potent bioactivities. The PKS-NRPS mpsA together with its associated enoylreductase partner mpsG incorporate one unit of acetyl-CoA, seven units of malonyl-CoA, and one unit of L-alanine to assemble the linear tetramic acid intermediate corresponding to the backbone of macrophasetins. Without the Diels-Alderase mpsD, the mpsA/G product can undergo the non-enzymatic intramolecular Diels-Alder (IMDA) reaction to generate both macrophasetin A and macrophasetin B. Catalyzed by mpsD, the linear tetramic acid intermediate is thoroughly converted to macrophasetin A via the endo-IMDA reaction in a regioselective and stereoselective manner. Finally, the cytochrome P450 monooxygenase mpsF catalyzes the hydroxylation at C20 to yield the end product macrophasetin C. The protein is Trans-enoyl reductase mpsG of Macrophomina phaseolina (strain MS6) (Charcoal rot fungus).